The chain runs to 511 residues: Probable mannosyl-oligosaccharide alpha-1,2-mannosidase 1B (511 aa).

An N-terminal signal peptide occupies residues 1 to 18 (MHLPSLSLAWALAGSSLA). N-linked (GlcNAc...) asparagine glycosylation is found at Asn-90 and Asn-177. Cys-327 and Cys-356 form a disulfide bridge. Glu-370 (proton donor) is an active-site residue. Residue Asn-433 is glycosylated (N-linked (GlcNAc...) asparagine). Thr-501 provides a ligand contact to Ca(2+).

It belongs to the glycosyl hydrolase 47 family. In terms of assembly, monomer. Requires Ca(2+) as cofactor. It depends on Mg(2+) as a cofactor.

The protein localises to the cytoplasmic vesicle lumen. The enzyme catalyses N(4)-(alpha-D-Man-(1-&gt;2)-alpha-D-Man-(1-&gt;2)-alpha-D-Man-(1-&gt;3)-[alpha-D-Man-(1-&gt;2)-alpha-D-Man-(1-&gt;3)-[alpha-D-Man-(1-&gt;2)-alpha-D-Man-(1-&gt;6)]-alpha-D-Man-(1-&gt;6)]-beta-D-Man-(1-&gt;4)-beta-D-GlcNAc-(1-&gt;4)-beta-D-GlcNAc)-L-asparaginyl-[protein] (N-glucan mannose isomer 9A1,2,3B1,2,3) + 4 H2O = N(4)-(alpha-D-Man-(1-&gt;3)-[alpha-D-Man-(1-&gt;3)-[alpha-D-Man-(1-&gt;6)]-alpha-D-Man-(1-&gt;6)]-beta-D-Man-(1-&gt;4)-beta-D-GlcNAc-(1-&gt;4)-beta-D-GlcNAc)-L-asparaginyl-[protein] (N-glucan mannose isomer 5A1,2) + 4 beta-D-mannose. It carries out the reaction N(4)-(alpha-D-Man-(1-&gt;2)-alpha-D-Man-(1-&gt;2)-alpha-D-Man-(1-&gt;3)-[alpha-D-Man-(1-&gt;3)-[alpha-D-Man-(1-&gt;2)-alpha-D-Man-(1-&gt;6)]-alpha-D-Man-(1-&gt;6)]-beta-D-Man-(1-&gt;4)-beta-D-GlcNAc-(1-&gt;4)-beta-D-GlcNAc)-L-asparaginyl-[protein] (N-glucan mannose isomer 8A1,2,3B1,3) + 3 H2O = N(4)-(alpha-D-Man-(1-&gt;3)-[alpha-D-Man-(1-&gt;3)-[alpha-D-Man-(1-&gt;6)]-alpha-D-Man-(1-&gt;6)]-beta-D-Man-(1-&gt;4)-beta-D-GlcNAc-(1-&gt;4)-beta-D-GlcNAc)-L-asparaginyl-[protein] (N-glucan mannose isomer 5A1,2) + 3 beta-D-mannose. The protein operates within protein modification; protein glycosylation. Its function is as follows. Involved in the maturation of Asn-linked oligosaccharides. Progressively trims alpha-1,2-linked mannose residues from Man(9)GlcNAc(2) to produce Man(5)GlcNAc(2). This chain is Probable mannosyl-oligosaccharide alpha-1,2-mannosidase 1B (mns1B), found in Aspergillus clavatus (strain ATCC 1007 / CBS 513.65 / DSM 816 / NCTC 3887 / NRRL 1 / QM 1276 / 107).